We begin with the raw amino-acid sequence, 133 residues long: Large-conductance mechanosensitive channel (133 aa).

2 helical membrane-spanning segments follow: residues 14–34 and 73–93; these read VVDL…VTTL and FITV…MVVV.

Belongs to the MscL family. Homopentamer.

It localises to the cell membrane. In terms of biological role, channel that opens in response to stretch forces in the membrane lipid bilayer. May participate in the regulation of osmotic pressure changes within the cell. This chain is Large-conductance mechanosensitive channel, found in Renibacterium salmoninarum (strain ATCC 33209 / DSM 20767 / JCM 11484 / NBRC 15589 / NCIMB 2235).